Reading from the N-terminus, the 83-residue chain is Protein WFDC9 (83 aa).

The signal sequence occupies residues 1–24 (MKPWIIVLTVSAHGILVFLHVLGS).

It is found in the secreted. This Mus musculus (Mouse) protein is Protein WFDC9 (Wfdc9).